We begin with the raw amino-acid sequence, 992 residues long: Disks large-associated protein 4 (992 aa).

Over residues 1-20 (MKGLGDSRPRHLSDSLDPPH) the composition is skewed to basic and acidic residues. Disordered regions lie at residues 1 to 31 (MKGLGDSRPRHLSDSLDPPHEPLFAGPDRNP) and 157 to 225 (MEGT…PASG). Positions 162–171 (GKVGGNGSKK) are enriched in gly residues. Residues 172–194 (GGLEDGKGRRAKSKERAKAGEPK) are compositionally biased toward basic and acidic residues. Over residues 199-208 (SNISGWWSSD) the composition is skewed to polar residues. Serine 206 and serine 207 each carry phosphoserine. Residue arginine 290 is modified to Omega-N-methylarginine. Positions 342–396 (TTLLSPRDMDSTAEGPIPCRRMRSGSYIKAMGDEDSDESGGGSPKPSPKTAARRQ) are disordered. 7 positions are modified to phosphoserine: serine 377, serine 380, serine 384, serine 388, serine 405, serine 415, and serine 421. Disordered stretches follow at residues 527-751 (SVSL…GPRQ), 763-798 (SYGDNSDPALEASSLPPPDPWLETSSSSPAEPAQPG), and 915-992 (TPEK…QTRL). Over residues 528-554 (VSLQSLSPPPSTGSLSNSRTLPSSSCL) the composition is skewed to low complexity. Residues 576 to 591 (VTVQSSTESAQDTYLD) are compositionally biased toward polar residues. Phosphoserine is present on residues serine 580, serine 581, serine 609, serine 611, serine 665, and serine 744. Over residues 600-620 (TSQSGLSNSSDSLDSSTRPPS) the composition is skewed to low complexity. A Phosphothreonine modification is found at threonine 915. 2 stretches are compositionally biased toward basic and acidic residues: residues 915-925 (TPEKRKEEKKP) and 940-958 (VSRDKASDAGDKQRQEARK). Residues 969–978 (VRQNSATESA) are compositionally biased toward polar residues. Position 973 is a phosphoserine (serine 973).

Belongs to the SAPAP family. Interacts with DLG1 and DLG4/PSD-95.

The protein resides in the membrane. Its function is as follows. May play a role in the molecular organization of synapses and neuronal cell signaling. Could be an adapter protein linking ion channel to the subsynaptic cytoskeleton. May induce enrichment of PSD-95/SAP90 at the plasma membrane. The sequence is that of Disks large-associated protein 4 (Dlgap4) from Mus musculus (Mouse).